A 168-amino-acid polypeptide reads, in one-letter code: Nicotinamide-nucleotide adenylyltransferase (168 aa).

The protein belongs to the archaeal NMN adenylyltransferase family.

Its subcellular location is the cytoplasm. The catalysed reaction is beta-nicotinamide D-ribonucleotide + ATP + H(+) = diphosphate + NAD(+). It participates in cofactor biosynthesis; NAD(+) biosynthesis; NAD(+) from nicotinamide D-ribonucleotide: step 1/1. This is Nicotinamide-nucleotide adenylyltransferase from Methanocorpusculum labreanum (strain ATCC 43576 / DSM 4855 / Z).